A 572-amino-acid chain; its full sequence is Urease subunit alpha (572 aa).

Residues 134-572 form the Urease domain; it reads GGIDSHIHFI…LPLAQRYFLF (439 aa). Residues His-139, His-141, and Lys-222 each coordinate Ni(2+). Lys-222 carries the N6-carboxylysine modification. His-224 contacts substrate. His-251 and His-277 together coordinate Ni(2+). The Proton donor role is filled by His-325. Residue Asp-365 coordinates Ni(2+).

The protein belongs to the metallo-dependent hydrolases superfamily. Urease alpha subunit family. As to quaternary structure, heterotrimer of UreA (gamma), UreB (beta) and UreC (alpha) subunits. Three heterotrimers associate to form the active enzyme. Ni cation serves as cofactor. Carboxylation allows a single lysine to coordinate two nickel ions.

It localises to the cytoplasm. The enzyme catalyses urea + 2 H2O + H(+) = hydrogencarbonate + 2 NH4(+). It participates in nitrogen metabolism; urea degradation; CO(2) and NH(3) from urea (urease route): step 1/1. The polypeptide is Urease subunit alpha (Paracidovorax citrulli (strain AAC00-1) (Acidovorax citrulli)).